The sequence spans 129 residues: Small ribosomal subunit protein uS11 (129 aa).

This sequence belongs to the universal ribosomal protein uS11 family. Part of the 30S ribosomal subunit. Interacts with proteins S7 and S18. Binds to IF-3.

In terms of biological role, located on the platform of the 30S subunit, it bridges several disparate RNA helices of the 16S rRNA. Forms part of the Shine-Dalgarno cleft in the 70S ribosome. The chain is Small ribosomal subunit protein uS11 from Pasteurella multocida (strain Pm70).